Reading from the N-terminus, the 172-residue chain is 3-phenylpropionate/cinnamic acid dioxygenase subunit beta (172 aa).

This sequence belongs to the bacterial ring-hydroxylating dioxygenase beta subunit family. In terms of assembly, this dioxygenase system consists of four proteins: the two subunits of the hydroxylase component (HcaE and HcaF), a ferredoxin (HcaC) and a ferredoxin reductase (HcaD).

The enzyme catalyses 3-phenylpropanoate + NADH + O2 + H(+) = 3-(cis-5,6-dihydroxycyclohexa-1,3-dien-1-yl)propanoate + NAD(+). It catalyses the reaction (E)-cinnamate + NADH + O2 + H(+) = (2E)-3-(cis-5,6-dihydroxycyclohexa-1,3-dien-1-yl)prop-2-enoate + NAD(+). It functions in the pathway aromatic compound metabolism; 3-phenylpropanoate degradation. Its function is as follows. Part of the multicomponent 3-phenylpropionate dioxygenase. Converts 3-phenylpropionic acid (PP) and cinnamic acid (CI) into 3-phenylpropionate-dihydrodiol (PP-dihydrodiol) and cinnamic acid-dihydrodiol (CI-dihydrodiol), respectively. The sequence is that of 3-phenylpropionate/cinnamic acid dioxygenase subunit beta from Escherichia coli O7:K1 (strain IAI39 / ExPEC).